The following is a 293-amino-acid chain: Cell division protein FtsQ (293 aa).

Over 1-27 the chain is Cytoplasmic; sequence MRPLMRNRASERGVDPAPSRWAWRMQR. A helical transmembrane segment spans residues 28–48; sequence LLLTPAFLLFLRAGVPVLVLF. The Periplasmic segment spans residues 49 to 293; that stretch reads GAATWWLSDT…WWEIRQVSRQ (245 aa). A POTRA domain is found at 81–149; it reads FMVQLMAVDG…GVLHIDVEPR (69 aa).

This sequence belongs to the FtsQ/DivIB family. FtsQ subfamily.

The protein localises to the cell inner membrane. Functionally, essential cell division protein. The sequence is that of Cell division protein FtsQ from Roseobacter litoralis (strain ATCC 49566 / DSM 6996 / JCM 21268 / NBRC 15278 / OCh 149).